The primary structure comprises 408 residues: MGDLTIPTMDDIDIQSKKVLLRIDINSPVDENGKIIDDSRIKAHIGTIKELINKGNSVVLISHQGRPGDKDFTSLEEHAKLISKYLDREVIFVDDVIGPYAREMIKKLENNGILLLDNIRLISEELIEAPPQQHVKSFLVKKLAPLFDIYINDAFATAHRSQPSIVGFPLALPSAAGRVMEREVSALAKIFNAEDTPKIFTLGGGKVHDTIRIIENLVRKRIADRILTGGLVAELFSVAKGMNLNPKNMEILEKLGILSLIPRARKLLLSGAPIEIPVDYKVEINGNVIEEPASKVTGIIKDIGSTTAEIYSSFIKDAKVVVLRGPMGVIEDERFKSGSKSVLKASLEGQGYVIIGGGHMISALDEDMKIDSSKVHISTGGGALLLFLSGERLPALEALSMSVVNSGD.

Residues 24–26, R40, 63–66, R120, and R160 contribute to the substrate site; these read DIN and HQGR. Residues E331 and 357-360 each bind ATP; that span reads GGHM.

It belongs to the phosphoglycerate kinase family.

It localises to the cytoplasm. It catalyses the reaction (2R)-3-phosphoglycerate + ATP = (2R)-3-phospho-glyceroyl phosphate + ADP. Its pathway is carbohydrate degradation; glycolysis; pyruvate from D-glyceraldehyde 3-phosphate: step 2/5. This Saccharolobus solfataricus (strain ATCC 35092 / DSM 1617 / JCM 11322 / P2) (Sulfolobus solfataricus) protein is Phosphoglycerate kinase (pgk).